The chain runs to 502 residues: Cardiolipin synthase (502 aa).

Helical transmembrane passes span 7-27 (VAIL…YWGG), 29-49 (LLGI…FVIS), and 59-79 (IAWL…YLLF). PLD phosphodiesterase domains follow at residues 237–264 (INFR…GDEY) and 415–442 (EKGF…DMRS). Catalysis depends on residues H242, K244, D249, H420, K422, and D427.

This sequence belongs to the phospholipase D family. Cardiolipin synthase subfamily.

Its subcellular location is the cell membrane. It catalyses the reaction 2 a 1,2-diacyl-sn-glycero-3-phospho-(1'-sn-glycerol) = a cardiolipin + glycerol. Functionally, catalyzes the reversible phosphatidyl group transfer from one phosphatidylglycerol molecule to another to form cardiolipin (CL) (diphosphatidylglycerol) and glycerol. In Geobacillus thermodenitrificans (strain NG80-2), this protein is Cardiolipin synthase (cls).